We begin with the raw amino-acid sequence, 309 residues long: Probable lipid kinase YegS-like (309 aa).

The DAGKc domain maps to Met1–His134. ATP-binding positions include Thr39, Gly65–Glu71, and Thr96. Mg(2+) is bound by residues Leu219, Asp222, and Leu224. Residue Glu280 is the Proton acceptor of the active site.

It belongs to the diacylglycerol/lipid kinase family. YegS lipid kinase subfamily. Mg(2+) is required as a cofactor. Requires Ca(2+) as cofactor.

It localises to the cytoplasm. Probably phosphorylates lipids; the in vivo substrate is unknown. The sequence is that of Probable lipid kinase YegS-like from Xanthomonas euvesicatoria pv. vesicatoria (strain 85-10) (Xanthomonas campestris pv. vesicatoria).